A 616-amino-acid chain; its full sequence is Adenylosuccinate synthetase 2 (616 aa).

The tract at residues 1 to 26 (MDKQAERDQSAGPVKTPQETQPPAHN) is disordered. The segment covering 17–26 (PQETQPPAHN) has biased composition (polar residues). GTP contacts are provided by residues 87 to 93 (GDEGKGK) and 117 to 119 (GHT). Asp88 acts as the Proton acceptor in catalysis. Positions 88 and 117 each coordinate Mg(2+). IMP is bound by residues 88–91 (DEGK), 115–118 (NAGH), Thr202, Lys216, Gln328, Thr343, and Lys472. The active-site Proton donor is the His118. Position 468–474 (468–474 (AVTKKPR)) interacts with substrate. GTP contacts are provided by residues Arg474 and 603–605 (GNG).

This sequence belongs to the adenylosuccinate synthetase family. In terms of assembly, homodimer. Mg(2+) is required as a cofactor.

The protein localises to the cytoplasm. The enzyme catalyses IMP + L-aspartate + GTP = N(6)-(1,2-dicarboxyethyl)-AMP + GDP + phosphate + 2 H(+). It participates in purine metabolism; AMP biosynthesis via de novo pathway; AMP from IMP: step 1/2. Functionally, plays an important role in the salvage pathway for purine nucleotide biosynthesis. Catalyzes the first committed step in the biosynthesis of AMP from IMP. This is Adenylosuccinate synthetase 2 from Trypanosoma cruzi (strain CL Brener).